The following is a 72-amino-acid chain: Protein LITTLE ZIPPER 4 (72 aa).

The stretch at 14-44 (YIIKENERLRKKAQILNQENQQLLFELKQKL) forms a coiled coil. Residues 42 to 72 (QKLSKTKNSSGSNQGNNNNNNNLSSSSSASG) form a disordered region. Residues 49-72 (NSSGSNQGNNNNNNNLSSSSSASG) show a composition bias toward low complexity.

Interacts with REV.

Functionally, competitive inhibitor of the HD-ZIPIII transcription factors in shoot apical meristem (SAM) development. Acts by forming non-functional heterodimers. Part of a negative feedback loop. Essential for proper functioning of stem cells in the SAM. The sequence is that of Protein LITTLE ZIPPER 4 from Arabidopsis thaliana (Mouse-ear cress).